Consider the following 214-residue polypeptide: UPF0502 protein Acid345_3645 (214 aa).

Belongs to the UPF0502 family.

This chain is UPF0502 protein Acid345_3645, found in Koribacter versatilis (strain Ellin345).